Here is a 431-residue protein sequence, read N- to C-terminus: 3-phosphoshikimate 1-carboxyvinyltransferase (431 aa).

3-phosphoshikimate-binding residues include Lys21, Ser22, and Arg26. Lys21 is a phosphoenolpyruvate binding site. Residues Gly94 and Arg122 each contribute to the phosphoenolpyruvate site. Residues Ser167, Gln169, Asp315, and Lys342 each contribute to the 3-phosphoshikimate site. Phosphoenolpyruvate is bound at residue Gln169. Asp315 serves as the catalytic Proton acceptor. Residues Arg346 and Arg388 each contribute to the phosphoenolpyruvate site.

It belongs to the EPSP synthase family. In terms of assembly, monomer.

It is found in the cytoplasm. The enzyme catalyses 3-phosphoshikimate + phosphoenolpyruvate = 5-O-(1-carboxyvinyl)-3-phosphoshikimate + phosphate. The protein operates within metabolic intermediate biosynthesis; chorismate biosynthesis; chorismate from D-erythrose 4-phosphate and phosphoenolpyruvate: step 6/7. Catalyzes the transfer of the enolpyruvyl moiety of phosphoenolpyruvate (PEP) to the 5-hydroxyl of shikimate-3-phosphate (S3P) to produce enolpyruvyl shikimate-3-phosphate and inorganic phosphate. This Pelotomaculum thermopropionicum (strain DSM 13744 / JCM 10971 / SI) protein is 3-phosphoshikimate 1-carboxyvinyltransferase.